Consider the following 965-residue polypeptide: Phosphoenolpyruvate carboxylase (965 aa).

S11 carries the phosphoserine modification. Catalysis depends on residues H173 and K601.

Belongs to the PEPCase type 1 family. Homotetramer. Mg(2+) is required as a cofactor.

The protein resides in the cytoplasm. The enzyme catalyses oxaloacetate + phosphate = phosphoenolpyruvate + hydrogencarbonate. It participates in photosynthesis; C3 acid pathway. Its activity is regulated as follows. By light-reversible phosphorylation. Through the carboxylation of phosphoenolpyruvate (PEP) it forms oxaloacetate, a four-carbon dicarboxylic acid source for the tricarboxylic acid cycle. This chain is Phosphoenolpyruvate carboxylase (PPC1), found in Solanum tuberosum (Potato).